A 309-amino-acid chain; its full sequence is L-aminoadipate-semialdehyde dehydrogenase-phosphopantetheinyl transferase (309 aa).

CoA is bound by residues Arg47, Arg86 to Lys91, and Asn108 to His111. The Mg(2+) site is built by Asp129 and Glu181. Glu181–Lys185 contributes to the CoA binding site.

Belongs to the P-Pant transferase superfamily. AcpS family. Monomer. Mg(2+) is required as a cofactor.

The protein resides in the cytoplasm. The protein localises to the cytosol. It carries out the reaction apo-[ACP] + CoA = holo-[ACP] + adenosine 3',5'-bisphosphate + H(+). It catalyses the reaction apo-[ACP] + acetyl-CoA = acetyl-[ACP] + adenosine 3',5'-bisphosphate + H(+). In terms of biological role, catalyzes the post-translational modification of target proteins by phosphopantetheine. Can transfer the 4'-phosphopantetheine moiety from coenzyme A, regardless of whether the CoA is presented in the free thiol form or as an acetyl thioester, to a serine residue of a broad range of acceptors including the acyl carrier domain of FASN. The polypeptide is L-aminoadipate-semialdehyde dehydrogenase-phosphopantetheinyl transferase (Aasdhppt) (Mus musculus (Mouse)).